A 356-amino-acid chain; its full sequence is S-adenosylmethionine:tRNA ribosyltransferase-isomerase (356 aa).

This sequence belongs to the QueA family. In terms of assembly, monomer.

It is found in the cytoplasm. It catalyses the reaction 7-aminomethyl-7-carbaguanosine(34) in tRNA + S-adenosyl-L-methionine = epoxyqueuosine(34) in tRNA + adenine + L-methionine + 2 H(+). It functions in the pathway tRNA modification; tRNA-queuosine biosynthesis. Its function is as follows. Transfers and isomerizes the ribose moiety from AdoMet to the 7-aminomethyl group of 7-deazaguanine (preQ1-tRNA) to give epoxyqueuosine (oQ-tRNA). The polypeptide is S-adenosylmethionine:tRNA ribosyltransferase-isomerase (Cronobacter sakazakii (strain ATCC BAA-894) (Enterobacter sakazakii)).